Reading from the N-terminus, the 310-residue chain is MAKVTANDLLEKFQFELLAGEEGIYRPITTSDISRPGIEMAGFFTYYPARRLQLIGRTELSFLKSLSDQEKEERMTKLCTYDTPGIILSRGLEAPEQLIAAADKRGVPVLRSTLTTTQLSSRVTNFLESELAPVTAVHGVLVDIYGIGVLITGGSGVGKSETALDLVRRGHRLVADDSVEIRQQNEDTLVGYPPPLLQHLLEIRGLGIINVMTLFGAGAVRPFKRISLCMNLELWDQTKAYDRLGLEEDKMKIFDTEITKMTVPVRPGRNLAVIIEVAAMNFRLKRLGFNAAQEFSERLTQVIEHGENEF.

Catalysis depends on residues H138 and K159. ATP is bound at residue 153-160; sequence GGSGVGKS. Position 160 (S160) interacts with Mg(2+). D177 serves as the catalytic Proton acceptor; for phosphorylation activity. Proton donor; for dephosphorylation activity. The tract at residues 201–210 is important for the catalytic mechanism of both phosphorylation and dephosphorylation; sequence LEIRGLGIIN. E202 contacts Mg(2+). Residue R243 is part of the active site. Residues 264 to 269 are important for the catalytic mechanism of dephosphorylation; that stretch reads PVRPGR.

It belongs to the HPrK/P family. In terms of assembly, homohexamer. Mg(2+) serves as cofactor.

It carries out the reaction [HPr protein]-L-serine + ATP = [HPr protein]-O-phospho-L-serine + ADP + H(+). The catalysed reaction is [HPr protein]-O-phospho-L-serine + phosphate + H(+) = [HPr protein]-L-serine + diphosphate. Functionally, catalyzes the ATP- as well as the pyrophosphate-dependent phosphorylation of a specific serine residue in HPr, a phosphocarrier protein of the phosphoenolpyruvate-dependent sugar phosphotransferase system (PTS). HprK/P also catalyzes the pyrophosphate-producing, inorganic phosphate-dependent dephosphorylation (phosphorolysis) of seryl-phosphorylated HPr (P-Ser-HPr). The two antagonistic activities of HprK/P are regulated by several intracellular metabolites, which change their concentration in response to the absence or presence of rapidly metabolisable carbon sources (glucose, fructose, etc.) in the growth medium. Also phosphorylates/dephosphorylates the HPr-like catabolite repression protein crh on a specific serine residue. Therefore, by controlling the phosphorylation state of HPr and crh, HPrK/P is a sensor enzyme that plays a major role in the regulation of carbon metabolism and sugar transport: it mediates carbon catabolite repression (CCR), and regulates PTS-catalyzed carbohydrate uptake and inducer exclusion. This chain is HPr kinase/phosphorylase, found in Shouchella clausii (strain KSM-K16) (Alkalihalobacillus clausii).